The following is a 1027-amino-acid chain: Presequence protease, mitochondrial (1027 aa).

The transit peptide at 1–22 (MIRQCWAGLRLCRALYQTSYRW) directs the protein to the mitochondrion. H98 contacts Zn(2+). The Proton acceptor role is filled by E101. Zn(2+) contacts are provided by H102 and E199. An intrachain disulfide couples C113 to C550. The interval 803–827 (RKAIRPHVVEKSSNPSPSGSEISRT) is disordered. Over residues 814–825 (SSNPSPSGSEIS) the composition is skewed to low complexity.

Belongs to the peptidase M16 family. PreP subfamily. In terms of assembly, monomer and homodimer; homodimerization is induced by binding of the substrate. The cofactor is Zn(2+). In terms of processing, a disulfide bond locks the enzyme in the closed conformation preventing substrate entry into the catalytic chamber.

It localises to the mitochondrion matrix. With respect to regulation, mainly exists in a closed and catalytically competent conformation but a closed-to-open switch allows substrate entry into the catalytic chamber. Substrate binding induces closure and dimerization. A disulfide bond may lock the enzyme in a closed conformation preventing substrate entry into the catalytic chamber, participating in redox regulation of the enzyme. Inhibited by metal-chelating agents. Inhibited by nickel and zinc excess, and slightly activated by manganese. In terms of biological role, metalloendopeptidase of the mitochondrial matrix that functions in peptide cleavage and degradation rather than in protein processing. Has an ATP-independent activity. Specifically cleaves peptides in the range of 5 to 65 residues. Shows a preference for cleavage after small polar residues and before basic residues, but without any positional preference. Degrades the transit peptides of mitochondrial proteins after their cleavage. Also degrades other unstructured peptides. The sequence is that of Presequence protease, mitochondrial (pitrm1) from Xenopus laevis (African clawed frog).